A 96-amino-acid polypeptide reads, in one-letter code: Co-chaperonin GroES (96 aa).

It belongs to the GroES chaperonin family. As to quaternary structure, heptamer of 7 subunits arranged in a ring. Interacts with the chaperonin GroEL.

Its subcellular location is the cytoplasm. Functionally, together with the chaperonin GroEL, plays an essential role in assisting protein folding. The GroEL-GroES system forms a nano-cage that allows encapsulation of the non-native substrate proteins and provides a physical environment optimized to promote and accelerate protein folding. GroES binds to the apical surface of the GroEL ring, thereby capping the opening of the GroEL channel. The chain is Co-chaperonin GroES from Polynucleobacter asymbioticus (strain DSM 18221 / CIP 109841 / QLW-P1DMWA-1) (Polynucleobacter necessarius subsp. asymbioticus).